The chain runs to 317 residues: Protoheme IX farnesyltransferase (317 aa).

A run of 9 helical transmembrane segments spans residues 36–56 (VMVL…ATVN), 57–77 (PVIA…SGCL), 108–128 (LAFG…ASNW), 129–149 (LAAG…SMWL), 157–177 (IVIG…AVTG), 184–204 (LVLF…LALV), 230–247 (IIWY…PVWL), 251–273 (GWLY…VQVY), and 284–304 (AAMG…SALL).

The protein belongs to the UbiA prenyltransferase family. Protoheme IX farnesyltransferase subfamily.

Its subcellular location is the cell inner membrane. The catalysed reaction is heme b + (2E,6E)-farnesyl diphosphate + H2O = Fe(II)-heme o + diphosphate. The protein operates within porphyrin-containing compound metabolism; heme O biosynthesis; heme O from protoheme: step 1/1. Its function is as follows. Converts heme B (protoheme IX) to heme O by substitution of the vinyl group on carbon 2 of heme B porphyrin ring with a hydroxyethyl farnesyl side group. The sequence is that of Protoheme IX farnesyltransferase from Methylorubrum extorquens (strain CM4 / NCIMB 13688) (Methylobacterium extorquens).